Here is a 490-residue protein sequence, read N- to C-terminus: ATP synthase subunit beta, chloroplastic (490 aa).

170–177 (GGAGVGKT) contributes to the ATP binding site.

Belongs to the ATPase alpha/beta chains family. As to quaternary structure, F-type ATPases have 2 components, CF(1) - the catalytic core - and CF(0) - the membrane proton channel. CF(1) has five subunits: alpha(3), beta(3), gamma(1), delta(1), epsilon(1). CF(0) has four main subunits: a(1), b(1), b'(1) and c(9-12).

Its subcellular location is the plastid. The protein resides in the chloroplast thylakoid membrane. It catalyses the reaction ATP + H2O + 4 H(+)(in) = ADP + phosphate + 5 H(+)(out). Its function is as follows. Produces ATP from ADP in the presence of a proton gradient across the membrane. The catalytic sites are hosted primarily by the beta subunits. This Ipomoea wrightii (Wright's morning glory) protein is ATP synthase subunit beta, chloroplastic.